Here is an 89-residue protein sequence, read N- to C-terminus: Large ribosomal subunit protein eL34 (89 aa).

A disordered region spans residues 1–22 (MPAPRYKSGSSKKVYRKAPGNS).

It belongs to the eukaryotic ribosomal protein eL34 family.

The sequence is that of Large ribosomal subunit protein eL34 from Methanococcus maripaludis (strain DSM 14266 / JCM 13030 / NBRC 101832 / S2 / LL).